Here is a 1267-residue protein sequence, read N- to C-terminus: DNA-directed RNA polymerase subunit beta'' (1267 aa).

Cys222, Cys290, Cys297, and Cys300 together coordinate Zn(2+).

Belongs to the RNA polymerase beta' chain family. RpoC2 subfamily. As to quaternary structure, in plastids the minimal PEP RNA polymerase catalytic core is composed of four subunits: alpha, beta, beta', and beta''. When a (nuclear-encoded) sigma factor is associated with the core the holoenzyme is formed, which can initiate transcription. It depends on Zn(2+) as a cofactor.

It localises to the plastid. It is found in the chloroplast. The catalysed reaction is RNA(n) + a ribonucleoside 5'-triphosphate = RNA(n+1) + diphosphate. Functionally, DNA-dependent RNA polymerase catalyzes the transcription of DNA into RNA using the four ribonucleoside triphosphates as substrates. The sequence is that of DNA-directed RNA polymerase subunit beta'' from Emiliania huxleyi (Coccolithophore).